The primary structure comprises 210 residues: MILKSQANKLKFTKQAKVFHYGSISLITEPCRSAHMKATEEAKEAGALLSYDPNLREPLWPSPEEARTQIMSIWDKADIIKVSDVELEFLTRNKTIDDETAMSLWHPNLKLLLVTLGEKGCRYYTKDFHGSVETFHVDAVDTTGAGDSFVGALLNQIVDDQSVLEEEERLRKVLRIANACGAITTTKKGAIPALPTDCEALSFLKRQVEQ.

This sequence belongs to the carbohydrate kinase PfkB family.

It catalyses the reaction D-fructose + ATP = D-fructose 6-phosphate + ADP + H(+). It functions in the pathway glycan biosynthesis; starch biosynthesis. Its function is as follows. May play an important role in maintaining the flux of carbon towards starch formation. The chain is Putative fructokinase-8 from Arabidopsis thaliana (Mouse-ear cress).